Reading from the N-terminus, the 360-residue chain is Chorismate synthase (360 aa).

R46 contributes to the NADP(+) binding site. Residues 123–125, 235–236, G275, 290–294, and R316 contribute to the FMN site; these read RSS, NA, and KPTPS.

It belongs to the chorismate synthase family. Homotetramer. It depends on FMNH2 as a cofactor.

It carries out the reaction 5-O-(1-carboxyvinyl)-3-phosphoshikimate = chorismate + phosphate. The protein operates within metabolic intermediate biosynthesis; chorismate biosynthesis; chorismate from D-erythrose 4-phosphate and phosphoenolpyruvate: step 7/7. In terms of biological role, catalyzes the anti-1,4-elimination of the C-3 phosphate and the C-6 proR hydrogen from 5-enolpyruvylshikimate-3-phosphate (EPSP) to yield chorismate, which is the branch point compound that serves as the starting substrate for the three terminal pathways of aromatic amino acid biosynthesis. This reaction introduces a second double bond into the aromatic ring system. In Wolinella succinogenes (strain ATCC 29543 / DSM 1740 / CCUG 13145 / JCM 31913 / LMG 7466 / NCTC 11488 / FDC 602W) (Vibrio succinogenes), this protein is Chorismate synthase.